Here is a 607-residue protein sequence, read N- to C-terminus: Rap1 GTPase-GDP dissociation stimulator 1 (607 aa).

ARM repeat units follow at residues 89 to 131 and 170 to 211; these read GLIS…DQAG and DSLQ…NLAE. Residues 122–170 are prevents binding to prenylated RHOA; it reads EGRSAVDQAGGAQIVIDHLRSLCGRTDPASEKLMTVFCGMLMNYSNEND. Residue Lys-230 is modified to N6-acetyllysine. ARM repeat units follow at residues 347–390, 391–431, and 479–519; these read DGNC…NLAI, PVVN…MLID, and SKDV…LIAA.

Interacts with RABL3. Interacts with RHOT1. In terms of assembly, interacts with unprenylated RHOA; the interaction is direct. Interacts with RAP1A. Interacts with KRAS. Interacts with RAC1. Interacts with RAP1B. Preferentially interacts with unprenylated GTPases that will become geranylgeranylated. May also interact with prenylated GTPases. As to quaternary structure, interacts with prenylated RHOA; the interaction is direct and in a 1:1 stoichiometry. Interacts with RAP1A. Interacts with KRAS. Interacts with RAC1. Interacts with RAP1B. Preferentially interacts with prenylated GTPases. Post-translationally, serotonylated on Gln residues by TGM2 in response to hypoxia, leading to its inactivation.

The protein resides in the cytoplasm. It localises to the cytosol. It is found in the endoplasmic reticulum. Its subcellular location is the mitochondrion. The protein localises to the nucleus. In terms of biological role, acts as a GEF (guanine nucleotide exchange factor) for the Rho family of small GTP-binding proteins (G proteins) that stimulates the dissociation of GDP to enable subsequent binding of GTP. Additionally, appears to chaperone the processing and/or trafficking of small GTPases containing a C-terminal polybasic region independently of GEF activity. Targets include RAP1A/RAP1B, RHOA, RHOB, RHOC, RAC1 and KRAS. Regulates mitochondrial dynamics by controlling RHOT function to promote mitochondrial fission during high calcium conditions. Able to promote the Ca(2+) release from the endoplasmic reticulum via both inositol trisphosphate (Ins3P) and ryanodine sensitive receptors leading to a enhanced mitochondrial Ca(2+) uptake. Its function is as follows. Acts as a GEF (guanine nucleotide exchange factor) for unprenylated RHOA. Chaperones the entry and passage of small GTPases through the prenylation pathway. Recognizes the last amino acid in the GTPase C-terminal CAAX motif with a preference for 'Leu' over 'Met', indicating involvement in the geranylgeranylation pathway. May also recognize prenylated GTPases. Functionally, acts as a GEF (guanine nucleotide exchange factor) for prenylated RHOA. Acts as a GEF for RHOC. Chaperones the downstream trafficking and/or processing of small newly prenylated GTPases. Escorts RAC1 to the nucleus. The polypeptide is Rap1 GTPase-GDP dissociation stimulator 1 (Mus musculus (Mouse)).